We begin with the raw amino-acid sequence, 81 residues long: ATP synthase subunit c (81 aa).

Helical transmembrane passes span 7 to 27 (LVAI…AIGF) and 55 to 75 (IAGL…FFIF).

This sequence belongs to the ATPase C chain family. In terms of assembly, F-type ATPases have 2 components, F(1) - the catalytic core - and F(0) - the membrane proton channel. F(1) has five subunits: alpha(3), beta(3), gamma(1), delta(1), epsilon(1). F(0) has three main subunits: a(1), b(2) and c(10-14). The alpha and beta chains form an alternating ring which encloses part of the gamma chain. F(1) is attached to F(0) by a central stalk formed by the gamma and epsilon chains, while a peripheral stalk is formed by the delta and b chains.

It is found in the cell inner membrane. Its function is as follows. F(1)F(0) ATP synthase produces ATP from ADP in the presence of a proton or sodium gradient. F-type ATPases consist of two structural domains, F(1) containing the extramembraneous catalytic core and F(0) containing the membrane proton channel, linked together by a central stalk and a peripheral stalk. During catalysis, ATP synthesis in the catalytic domain of F(1) is coupled via a rotary mechanism of the central stalk subunits to proton translocation. In terms of biological role, key component of the F(0) channel; it plays a direct role in translocation across the membrane. A homomeric c-ring of between 10-14 subunits forms the central stalk rotor element with the F(1) delta and epsilon subunits. The polypeptide is ATP synthase subunit c (Acinetobacter baumannii (strain ACICU)).